Consider the following 574-residue polypeptide: Proline--tRNA ligase (574 aa).

It belongs to the class-II aminoacyl-tRNA synthetase family. ProS type 1 subfamily. In terms of assembly, homodimer.

The protein localises to the cytoplasm. It catalyses the reaction tRNA(Pro) + L-proline + ATP = L-prolyl-tRNA(Pro) + AMP + diphosphate. In terms of biological role, catalyzes the attachment of proline to tRNA(Pro) in a two-step reaction: proline is first activated by ATP to form Pro-AMP and then transferred to the acceptor end of tRNA(Pro). As ProRS can inadvertently accommodate and process non-cognate amino acids such as alanine and cysteine, to avoid such errors it has two additional distinct editing activities against alanine. One activity is designated as 'pretransfer' editing and involves the tRNA(Pro)-independent hydrolysis of activated Ala-AMP. The other activity is designated 'posttransfer' editing and involves deacylation of mischarged Ala-tRNA(Pro). The misacylated Cys-tRNA(Pro) is not edited by ProRS. This is Proline--tRNA ligase from Desulfovibrio desulfuricans (strain ATCC 27774 / DSM 6949 / MB).